A 370-amino-acid chain; its full sequence is Protein phosphatase 2C homolog 2 (370 aa).

Residues 23–291 form the PPM-type phosphatase domain; the sequence is HFGVSHMQGW…DNMTICIVAF (269 aa). Mn(2+) contacts are provided by Asp63, Gly64, Asp233, and Asp282. Residues Ser355 and Ser357 each carry the phosphoserine modification.

The protein belongs to the PP2C family. In terms of assembly, monomer. The cofactor is Mg(2+). It depends on Mn(2+) as a cofactor.

Its subcellular location is the nucleus. It is found in the cytoplasm. The protein resides in the cytosol. It carries out the reaction O-phospho-L-seryl-[protein] + H2O = L-seryl-[protein] + phosphate. The catalysed reaction is O-phospho-L-threonyl-[protein] + H2O = L-threonyl-[protein] + phosphate. With respect to regulation, activity is reduced when phosphosrylated at Ser-355/Ser-357. Functionally, dephosphorylating regulator for many key proteins. Has an important role in osmotic stability and cell shape control. It may negatively regulate the osmosensing signal transmitted through wis1 map kinase. This is Protein phosphatase 2C homolog 2 (ptc2) from Schizosaccharomyces pombe (strain 972 / ATCC 24843) (Fission yeast).